An 85-amino-acid chain; its full sequence is MKKILFSMFYSILVGEEPDSVFLKKEGKQNQVKMIWIAPSSCAKDLTISEGTGATFLFNFHSRVSICFHALFLRPRNMKWTNSFS.

The protein belongs to the ycf76 family.

The protein localises to the plastid. It localises to the chloroplast. This is an uncharacterized protein from Saccharum hybrid (Sugarcane).